The primary structure comprises 71 residues: Natterin-P (71 aa).

Positions 1 to 18 are cleaved as a signal peptide; it reads MKLLVLLVTLLVLSWTSA. Positions 19-45 are excised as a propeptide; the sequence is EDLGDQEILENNEDNNHESELGEPAAQ. Over residues 22-31 the composition is skewed to acidic residues; the sequence is GDQEILENNE. A disordered region spans residues 22 to 54; sequence GDQEILENNEDNNHESELGEPAAQHTDDETSQL. Cys-62 and Cys-71 are disulfide-bonded.

It belongs to the natterin family. As to expression, expressed by the venom gland.

The protein localises to the secreted. With respect to regulation, inhibited by tissue-kallikrein inhibitor TKI and trasylol. Plasma kallikrein inhibitor PKSI527 and classical inhibitors of serine-, metallo-, thiol- or aspartate-peptidases evokes a minor inhibition of the peptide digestion. Functionally, shows nociceptive, edema-inducing and kininogenase activity with release of kallidin from low molecular weight kininogen. The cleavage occurs at Met-Lys bonds. The polypeptide is Natterin-P (Thalassophryne nattereri (Copper Joe toadfish)).